The sequence spans 361 residues: Ribosomal RNA large subunit methyltransferase M (361 aa).

S-adenosyl-L-methionine is bound by residues S193, C226–G229, D245, D265, and D283. Catalysis depends on K312, which acts as the Proton acceptor.

It belongs to the class I-like SAM-binding methyltransferase superfamily. RNA methyltransferase RlmE family. RlmM subfamily. Monomer.

The protein localises to the cytoplasm. The enzyme catalyses cytidine(2498) in 23S rRNA + S-adenosyl-L-methionine = 2'-O-methylcytidine(2498) in 23S rRNA + S-adenosyl-L-homocysteine + H(+). In terms of biological role, catalyzes the 2'-O-methylation at nucleotide C2498 in 23S rRNA. This chain is Ribosomal RNA large subunit methyltransferase M, found in Histophilus somni (strain 2336) (Haemophilus somnus).